The following is a 66-amino-acid chain: Large ribosomal subunit protein bL35 (66 aa).

This sequence belongs to the bacterial ribosomal protein bL35 family.

This is Large ribosomal subunit protein bL35 from Deinococcus deserti (strain DSM 17065 / CIP 109153 / LMG 22923 / VCD115).